A 131-amino-acid chain; its full sequence is Heat shock protein 15 homolog (131 aa).

The 62-residue stretch at 6–67 (VRLDKWLWAA…NEEKEIKIIA (62 aa)) folds into the S4 RNA-binding domain. Positions 98-131 (ARKNNSLSMPHPDRRPNKKERRDLLKFKHQDKFE) are disordered. Residues 108–131 (HPDRRPNKKERRDLLKFKHQDKFE) show a composition bias toward basic and acidic residues.

The protein belongs to the HSP15 family.

Involved in the recycling of free 50S ribosomal subunits that still carry a nascent chain. Binds RNA more specifically than DNA. Binds with very high affinity to the free 50S ribosomal subunit. Does not bind it when it is part of the 70S ribosome. The chain is Heat shock protein 15 homolog (hslR) from Haemophilus influenzae (strain ATCC 51907 / DSM 11121 / KW20 / Rd).